Reading from the N-terminus, the 346-residue chain is Putative D-xylulose reductase (346 aa).

3 residues coordinate Zn(2+): Cys39, His64, and Glu150.

It belongs to the zinc-containing alcohol dehydrogenase family. The cofactor is Zn(2+).

The catalysed reaction is xylitol + NAD(+) = D-xylulose + NADH + H(+). In Rhizobium meliloti (strain 1021) (Ensifer meliloti), this protein is Putative D-xylulose reductase.